Consider the following 489-residue polypeptide: Cysteine--tRNA ligase (489 aa).

Position 27 (Cys-27) interacts with Zn(2+). Positions 29–39 (VTVYDLCHLGH) match the 'HIGH' region motif. 3 residues coordinate Zn(2+): Cys-211, His-236, and Glu-240. Residues 268–272 (KMSKS) carry the 'KMSKS' region motif. Position 271 (Lys-271) interacts with ATP.

It belongs to the class-I aminoacyl-tRNA synthetase family. In terms of assembly, monomer. Zn(2+) is required as a cofactor.

It localises to the cytoplasm. The enzyme catalyses tRNA(Cys) + L-cysteine + ATP = L-cysteinyl-tRNA(Cys) + AMP + diphosphate. This Prochlorococcus marinus (strain AS9601) protein is Cysteine--tRNA ligase.